The primary structure comprises 635 residues: MAGUK p55 subfamily member 4 (635 aa).

Positions 1 to 16 (MRQSDRGAELTNEDRA) are enriched in basic and acidic residues. The disordered stretch occupies residues 1 to 23 (MRQSDRGAELTNEDRALPTPPDP). L27 domains follow at residues 23-79 (PENG…EKKL) and 86-136 (AQIL…FEPL). A PDZ domain is found at 153-234 (IVCLVKNQQP…TIMFKVIPVS (82 aa)). Residues 241 to 311 (QKMVYVRAMI…PSNHLLKRKQ (71 aa)) enclose the SH3 domain. A Guanylate kinase-like domain is found at 426 to 615 (HRLIVLVGPS…ACGQLLSAIQ (190 aa)). The stretch at 567–622 (VDMKFKDEDLQEMEELAQKMESQFGQFFDHVIVNDNLQDACGQLLSAIQKAQEELQ) forms a coiled coil.

It belongs to the MAGUK family. May interact with GRIA2. Interacts with MPDZ. Forms a complex with CRB1 and PALS1. Interacts with FASLG. In terms of tissue distribution, detected in the retina (at protein level). Highly enriched in the retina where it is mainly expressed by rod photoreceptors; detected in the inner segment of the photoreceptor layer and in the outer nuclear layer. Also detected at much lower levels in pineal gland, cerebellum, cortex, hippocampus, olfactory bulb, heart, liver and spleen. Expressed in the CA1-CA3 regions of pyramidal cell layers and in the granule cell layer of dentate gyrus in the hippocampus. In the cerebellum, expressed in Purkinje cells and throughout the granule cell layer. In the olfactory bulb, expressed in mitral cells.

It is found in the cytoplasm. May play a role in retinal photoreceptors development. The sequence is that of MAGUK p55 subfamily member 4 (Mpp4) from Mus musculus (Mouse).